The sequence spans 138 residues: MRALWIVAVLLLGVEGSLLQFRKMIKKMTGKEPVVSYAFYGCYCGSGGRGKPKDATDRCCFVHDCCYEKLTGCDPKWDDYTYSWKNGTIVCGGDDPCKKEVCECDKAAAICFRDNLKTYKKRYMTYPNILCSSKSEKC.

The signal sequence occupies residues 1–16 (MRALWIVAVLLLGVEG). Disulfide bonds link Cys42-Cys131, Cys44-Cys60, Cys59-Cys111, Cys65-Cys138, Cys66-Cys104, Cys73-Cys97, and Cys91-Cys102. Ca(2+)-binding residues include Tyr43, Gly45, and Gly47. His63 is a catalytic residue. Asp64 provides a ligand contact to Ca(2+). Asp105 is a catalytic residue.

This sequence belongs to the phospholipase A2 family. Group II subfamily. D49 sub-subfamily. Requires Ca(2+) as cofactor. As to expression, expressed by the venom gland.

Its subcellular location is the secreted. The catalysed reaction is a 1,2-diacyl-sn-glycero-3-phosphocholine + H2O = a 1-acyl-sn-glycero-3-phosphocholine + a fatty acid + H(+). Functionally, snake venom phospholipase A2 (PLA2) that shows potent hemolytic activity, and exhibits medium anticoagulant effects by binding to factor Xa (F10) and inhibiting the prothrombinase activity (IC(50) is 90 nM). It is one of the few phospholipases A2 capable of hydrolyzing the phospholipids of E.coli membranes in the presence of a bactericidal/permeability-increasing protein (BPI) of neutrophils. PLA2 catalyzes the calcium-dependent hydrolysis of the 2-acyl groups in 3-sn-phosphoglycerides. The sequence is that of Basic phospholipase A2 B from Gloydius halys (Chinese water mocassin).